The following is a 142-amino-acid chain: Transcriptional regulator MraZ (142 aa).

SpoVT-AbrB domains are found at residues 5–47 (EYPY…PLAS) and 76–119 (ANKA…NPER).

It belongs to the MraZ family. In terms of assembly, forms oligomers.

The protein localises to the cytoplasm. It is found in the nucleoid. This chain is Transcriptional regulator MraZ, found in Deinococcus geothermalis (strain DSM 11300 / CIP 105573 / AG-3a).